Consider the following 193-residue polypeptide: CASP-like protein 1E1 (193 aa).

Over 1–30 the chain is Cytoplasmic; that stretch reads MESQNKASLPVMDGLERRVVASQSEGASTC. The helical transmembrane segment at 31–51 threads the bilayer; the sequence is DLLLRVLALVLTLAAAIVLGV. Residues 52–86 lie on the Extracellular side of the membrane; that stretch reads DKQTKVVPIKIVDTLPAINLPVSAKWHYLSAFTYS. Residues 87–107 form a helical membrane-spanning segment; it reads VASNAIACSYAALSLVLAVSG. At 108-113 the chain is on the cytoplasmic side; it reads KKGIMS. A helical transmembrane segment spans residues 114-134; that stretch reads IVIVLDLLMVAMLFSSNGAAL. Residues 135 to 162 are Extracellular-facing; the sequence is AIGLMGYQGNSHVRWTKVCHVFGRFCNQ. Residues 163 to 183 form a helical membrane-spanning segment; sequence VAVSISLSLLGSILFLLLVGI. Residues 184-193 are Cytoplasmic-facing; the sequence is TSLRLHKKSK.

The protein belongs to the Casparian strip membrane proteins (CASP) family. Homodimer and heterodimers.

The protein localises to the cell membrane. This Populus trichocarpa (Western balsam poplar) protein is CASP-like protein 1E1.